Here is a 300-residue protein sequence, read N- to C-terminus: Probable mitochondrial 2-oxodicarboxylate carrier (300 aa).

The tract at residues 1 to 20 (MTSKGNAGNPPTPTPAPVKS) is disordered. Solcar repeat units follow at residues 21 to 104 (QPLW…YEKQ), 114 to 200 (PTQM…IKSA), and 209 to 295 (GVLV…VMKL). 6 consecutive transmembrane segments (helical) span residues 27–47 (LVSG…LDVV), 74–93 (LKMY…KRAI), 120–140 (IGSG…FELV), 171–191 (GFFK…GGYF), 209–229 (GVLV…TMLN), and 278–298 (LGPG…LLAG).

Belongs to the mitochondrial carrier (TC 2.A.29) family.

The protein localises to the mitochondrion inner membrane. The catalysed reaction is 2-oxoadipate(in) + 2-oxoglutarate(out) = 2-oxoadipate(out) + 2-oxoglutarate(in). It carries out the reaction hexanedioate(in) + 2-oxoglutarate(out) = hexanedioate(out) + 2-oxoglutarate(in). The enzyme catalyses L-2-aminoadipate(in) + 2-oxoglutarate(out) = L-2-aminoadipate(out) + 2-oxoglutarate(in). It catalyses the reaction glutarate(in) + 2-oxoglutarate(out) = glutarate(out) + 2-oxoglutarate(in). The catalysed reaction is 2-oxoheptanedioate(in) + 2-oxoglutarate(out) = 2-oxoheptanedioate(out) + 2-oxoglutarate(in). It carries out the reaction heptanedioate(in) + 2-oxoglutarate(out) = heptanedioate(out) + 2-oxoglutarate(in). The enzyme catalyses citrate(in) + 2-oxoglutarate(out) = citrate(out) + 2-oxoglutarate(in). Its function is as follows. Transports dicarboxylates across the inner membranes of mitochondria by a counter-exchange mechanism. Can transport 2-oxoadipate (2-oxohexanedioate), 2-oxoglutarate, adipate (hexanedioate), glutarate, and to a lesser extent, pimelate (heptanedioate), 2-oxopimelate (2-oxoheptanedioate), 2-aminoadipate (2-aminohexanedioate), oxaloacetate, and citrate. Plays a central role in catabolism of lysine, hydroxylysine, and tryptophan, by transporting common metabolite intermediates (such as 2-oxoadipate) into the mitochondria, where it is converted into acetyl-CoA and can enter the citric acid (TCA) cycle. This Dictyostelium discoideum (Social amoeba) protein is Probable mitochondrial 2-oxodicarboxylate carrier (mcfT).